The primary structure comprises 617 residues: Hemagglutinin glycoprotein (617 aa).

The Intravirion portion of the chain corresponds to 1 to 37 (MSPQRDRINAFDKDNPHPXXXXXXXXXXXXXXXRPYV). Residues 1-154 (MSPQRDRINA…RIKLDYDQYC (154 aa)) form a stalk region. Residues 38 to 58 (LLAVLFVMFLSLIGLLAIAGI) traverse the membrane as a helical; Signal-anchor for type II membrane protein segment. The Virion surface segment spans residues 59-617 (RFHRAAIYTA…VTREDGTNCR (559 aa)). N-linked (GlcNAc...) asparagine; by host glycosylation is found at Asn168, Asn187, Asn200, Asn215, and Asn238. Cystine bridges form between Cys188-Cys606, Cys287-Cys300, Cys381-Cys494, Cys386-Cys394, and Cys570-Cys579. An interaction with host NECTIN4 receptor region spans residues 458–543 (PMKSLALGVV…VEHAVVYYVY (86 aa)).

This sequence belongs to the paramyxoviruses hemagglutinin-neuraminidase family. Non-sialidase subfamily. In terms of assembly, homodimer; disulfide-linked. Further forms homotetramer (dimer of dimers). Interacts (via C-terminus) with human NECTIN4 (via N-terminus); this interaction allows attachment to the respiratory epithelium and viral entry. Interacts (via C-terminus) with human SLAMF1/CD150 (via N-terminus); this interaction allows attachment and viral entry into the CD150-expressing immune cells.

It is found in the virion membrane. Its subcellular location is the host cell membrane. Its function is as follows. Attaches the virus to the human SLAMF1/CD150 receptor for entry into host dendritic cells, macrophages, activated memory T cells and naive or memory B cells, thereby explaining the long immunosuppression that follows infection. In the respiratory airways, binds to the NECTIN4 receptor for entry into the host cell. Binding of H protein to the receptor induces a conformational change that allows the F protein to trigger virion/cell membranes fusion. The vaccine and laboratory-adapted strains use host CD46 as an alternate receptor. The high degree of interaction between H and CD46 results in down-regulation of the latter from the surface of infected cells, rendering them more sensitive to c3b-mediated complement lysis. The sequence is that of Hemagglutinin glycoprotein (H) from Homo sapiens (Human).